We begin with the raw amino-acid sequence, 245 residues long: uncharacterized protein (245 aa).

An HTH gntR-type domain is found at 29-96; sequence RSLIEATFQR…AQRGFHVTPM (68 aa). Residues 56 to 75 constitute a DNA-binding region (H-T-H motif); the sequence is IEDLKSRYEVSGGTVREALS.

This is an uncharacterized protein from Paraburkholderia xenovorans (strain LB400).